We begin with the raw amino-acid sequence, 522 residues long: Lysophospholipid acyltransferase LPCAT4 (522 aa).

2 helical membrane passes run 43-63 and 92-112; these read ILGF…LFLM and HLIY…WITI. The HXXXXD motif signature appears at 130–135; that stretch reads HSTFFD. Residues Asn166 and Asn517 are each glycosylated (N-linked (GlcNAc...) asparagine). The tract at residues 496–522 is disordered; it reads GRRKPPHIQQNGGCSGKNNPRNQSKMD. A compositionally biased stretch (polar residues) spans 503–522; sequence IQQNGGCSGKNNPRNQSKMD.

This sequence belongs to the 1-acyl-sn-glycerol-3-phosphate acyltransferase family.

It localises to the endoplasmic reticulum membrane. The catalysed reaction is a 1-acyl-sn-glycero-3-phosphoethanolamine + an acyl-CoA = a 1,2-diacyl-sn-glycero-3-phosphoethanolamine + CoA. It carries out the reaction a 1-O-(1Z-alkenyl)-sn-glycero-3-phosphoethanolamine + an acyl-CoA = a 1-O-(1Z-alkenyl)-2-acyl-sn-glycero-3-phosphoethanolamine + CoA. The enzyme catalyses a 1-acyl-sn-glycero-3-phosphocholine + an acyl-CoA = a 1,2-diacyl-sn-glycero-3-phosphocholine + CoA. It catalyses the reaction a 1-O-alkyl-sn-glycero-3-phosphocholine + acetyl-CoA = a 1-O-alkyl-2-acetyl-sn-glycero-3-phosphocholine + CoA. The catalysed reaction is a 1-acyl-sn-glycero-3-phospho-L-serine + an acyl-CoA = a 1,2-diacyl-sn-glycero-3-phospho-L-serine + CoA. Its pathway is lipid metabolism; phospholipid metabolism. Its function is as follows. Displays acyl-CoA-dependent lysophospholipid acyltransferase activity with a subset of lysophospholipids as substrates. Prefers long chain acyl-CoAs (C16, C18) as acyl donors. The protein is Lysophospholipid acyltransferase LPCAT4 (lpcat4) of Xenopus tropicalis (Western clawed frog).